The following is a 416-amino-acid chain: Exodeoxyribonuclease 7 large subunit (416 aa).

It belongs to the XseA family. In terms of assembly, heterooligomer composed of large and small subunits.

It is found in the cytoplasm. It carries out the reaction Exonucleolytic cleavage in either 5'- to 3'- or 3'- to 5'-direction to yield nucleoside 5'-phosphates.. Its function is as follows. Bidirectionally degrades single-stranded DNA into large acid-insoluble oligonucleotides, which are then degraded further into small acid-soluble oligonucleotides. The chain is Exodeoxyribonuclease 7 large subunit from Nitratiruptor sp. (strain SB155-2).